A 176-amino-acid chain; its full sequence is Large ribosomal subunit protein uL16 (176 aa).

Belongs to the universal ribosomal protein uL16 family.

This Picrophilus torridus (strain ATCC 700027 / DSM 9790 / JCM 10055 / NBRC 100828 / KAW 2/3) protein is Large ribosomal subunit protein uL16.